The sequence spans 96 residues: Small ribosomal subunit protein bS6 (96 aa).

The protein belongs to the bacterial ribosomal protein bS6 family.

In terms of biological role, binds together with bS18 to 16S ribosomal RNA. This is Small ribosomal subunit protein bS6 from Gloeobacter violaceus (strain ATCC 29082 / PCC 7421).